Consider the following 292-residue polypeptide: Probable endonuclease 4 (292 aa).

Histidine 70, histidine 111, glutamate 146, aspartate 180, histidine 183, histidine 215, aspartate 228, histidine 230, and glutamate 260 together coordinate Zn(2+).

The protein belongs to the AP endonuclease 2 family. It depends on Zn(2+) as a cofactor.

The enzyme catalyses Endonucleolytic cleavage to 5'-phosphooligonucleotide end-products.. Functionally, endonuclease IV plays a role in DNA repair. It cleaves phosphodiester bonds at apurinic or apyrimidinic (AP) sites, generating a 3'-hydroxyl group and a 5'-terminal sugar phosphate. The polypeptide is Probable endonuclease 4 (Shouchella clausii (strain KSM-K16) (Alkalihalobacillus clausii)).